Here is a 932-residue protein sequence, read N- to C-terminus: Receptor-like protein 9a (932 aa).

The signal sequence occupies residues 1 to 28 (MLIFTIPQFFFAAWVMVVSLQMQGYISC). The Extracellular segment spans residues 29–888 (IEKERKGLLE…DDETAIDMET (860 aa)). Residues N53, N80, and N90 are each glycosylated (N-linked (GlcNAc...) asparagine). 28 LRR repeats span residues 97–122 (FEEL…GYKS), 126–152 (LKKL…AASS), 154–174 (RTLI…ELKD), 175–200 (LSNL…VLHK), 202–222 (HALD…GLCQ), 223–246 (LKNL…CFSS), 247–273 (LTQL…NLDS), 275–295 (EYLS…LIAN), 296–320 (LSKL…ISLQ), 322–345 (KFRL…LQQQ), 346–368 (KDLR…WFLE), 370–393 (YPKL…RLLV), 394–417 (HSLH…IGHV), 418–441 (LPNI…SFSE), 443–466 (KKIF…FCIG), 468–491 (SSLS…PMKL), 492–514 (ESLR…LIHS), 516–535 (GLVF…PSWF), 536–560 (GGFY…TLFN), 561–583 (VSFQ…HFSF), 585–605 (HMGL…STLL), 606–629 (ENVM…VSNR), 631–652 (FLYL…LCEL), 653–676 (KSIR…LNNV), 745–769 (FKFM…LGDF), 770–792 (QRIR…SFSN), 794–817 (TDIE…LTKL), and 819–842 (YIVV…KFLS). A glycan (N-linked (GlcNAc...) asparagine) is linked at N140. N-linked (GlcNAc...) asparagine glycosylation is found at N261 and N295. N-linked (GlcNAc...) asparagine glycosylation is found at N352 and N380. N-linked (GlcNAc...) asparagine glycosylation is found at N420, N425, and N454. N-linked (GlcNAc...) asparagine glycans are attached at residues N524, N551, and N560. N-linked (GlcNAc...) asparagine glycosylation is found at N666 and N675. N776 and N792 each carry an N-linked (GlcNAc...) asparagine glycan. N-linked (GlcNAc...) asparagine glycans are attached at residues N824, N829, N860, and N866. Residues 889–909 (FYWSLFATYGITWMAFIVFLC) form a helical membrane-spanning segment. Topologically, residues 910–932 (FDSPWRQAWFRLVNVFVSFLKCV) are cytoplasmic.

It belongs to the RLP family.

The protein resides in the cell membrane. In Arabidopsis thaliana (Mouse-ear cress), this protein is Receptor-like protein 9a.